We begin with the raw amino-acid sequence, 321 residues long: Proline-rich protein 2 (321 aa).

A signal peptide spans 1-26; the sequence is MRILPKSGGGALCLLFVFALCSVAHS. Tandem repeats lie at residues 168 to 172, 173 to 176, 177 to 181, 185 to 189, 190 to 194, 198 to 202, 207 to 211, 212 to 217, 218 to 223, 225 to 229, 234 to 238, 240 to 244, 245 to 251, 252 to 256, 262 to 266, 267 to 271, 272 to 276, 277 to 281, 282 to 286, 288 to 292, 293 to 297, 298 to 302, 303 to 307, and 315 to 319. Residues 168-319 form a 24 X 5 AA approximate repeats region; that stretch reads PPLNLPPLTF…KFGKWPPFPS (152 aa).

Belongs to the plant proline-rich protein superfamily. As to expression, mostly expressed in aerial organs, particularly in expanding leaves, stems, flowers, and siliques.

Its subcellular location is the secreted. The protein resides in the cell wall. The sequence is that of Proline-rich protein 2 (PRP2) from Arabidopsis thaliana (Mouse-ear cress).